The sequence spans 430 residues: Delta(14)-sterol reductase (430 aa).

The next 6 membrane-spanning stretches (helical) occupy residues 12–32, 67–87, 109–129, 230–250, 267–287, and 290–310; these read IGTG…HFLI, LAVA…PAEI, FLVF…TWWF, FVSD…VDAL, LGVM…CLQA, and LASF…AVQF. Residues K323, R327, L350, W355, and 362–363 contribute to the NADP(+) site; that span reads NY. 2 consecutive transmembrane segments (helical) span residues 349–369 and 376–396; these read LLIS…DWIM and TTGF…ILLL. NADP(+)-binding positions include D402, 406–410, and Y417; that span reads CREKY.

This sequence belongs to the ERG4/ERG24 family.

The protein localises to the membrane. It catalyses the reaction 4,4-dimethyl-5alpha-cholesta-8,24-dien-3beta-ol + NADP(+) = 4,4-dimethyl-5alpha-cholesta-8,14,24-trien-3beta-ol + NADPH + H(+). It participates in steroid biosynthesis; zymosterol biosynthesis; zymosterol from lanosterol: step 2/6. Its function is as follows. Reduces the C14=C15 double bond of 4,4-dimethyl-cholesta-8,14,24-trienol to produce 4,4-dimethyl-cholesta-8,24-dienol. The chain is Delta(14)-sterol reductase (ERG3) from Ascobolus immersus.